A 334-amino-acid chain; its full sequence is S-adenosylmethionine decarboxylase proenzyme (334 aa).

Position 7 (Phe7) interacts with substrate. Active-site residues include Glu8 and Glu11. Glu67 contacts substrate. Catalysis depends on Ser68, which acts as the Schiff-base intermediate with substrate; via pyruvic acid. Ser68 carries the pyruvic acid (Ser); by autocatalysis modification. Cys82 serves as the catalytic Proton donor; for catalytic activity. Phe223 serves as a coordination point for substrate. Catalysis depends on proton acceptor; for processing activity residues Ser229 and His243. Glu247 is a substrate binding site. At Ser298 the chain carries Phosphoserine.

This sequence belongs to the eukaryotic AdoMetDC family. Heterotetramer of two alpha and two beta chains. It depends on pyruvate as a cofactor. Is synthesized initially as an inactive proenzyme. Formation of the active enzyme involves a self-maturation process in which the active site pyruvoyl group is generated from an internal serine residue via an autocatalytic post-translational modification. Two non-identical subunits are generated from the proenzyme in this reaction, and the pyruvate is formed at the N-terminus of the alpha chain, which is derived from the carboxyl end of the proenzyme. The post-translation cleavage follows an unusual pathway, termed non-hydrolytic serinolysis, in which the side chain hydroxyl group of the serine supplies its oxygen atom to form the C-terminus of the beta chain, while the remainder of the serine residue undergoes an oxidative deamination to produce ammonia and the pyruvoyl group blocking the N-terminus of the alpha chain.

The enzyme catalyses S-adenosyl-L-methionine + H(+) = S-adenosyl 3-(methylsulfanyl)propylamine + CO2. It participates in amine and polyamine biosynthesis; S-adenosylmethioninamine biosynthesis; S-adenosylmethioninamine from S-adenosyl-L-methionine: step 1/1. Its function is as follows. Essential for biosynthesis of the polyamines spermidine and spermine. Promotes maintenance and self-renewal of embryonic stem cells, by maintaining spermine levels. The polypeptide is S-adenosylmethionine decarboxylase proenzyme (AMD1) (Mesocricetus auratus (Golden hamster)).